The primary structure comprises 70 residues: DNA-directed RNA polymerases I, II, and III subunit rpabc5 (70 aa).

Cys7, Cys10, Cys44, and Cys45 together coordinate Zn(2+).

This sequence belongs to the archaeal Rpo10/eukaryotic RPB10 RNA polymerase subunit family. In terms of assembly, component of the RNA polymerase I (Pol I), RNA polymerase II (Pol II) and RNA polymerase III (Pol III) complexes.

It is found in the nucleus. Its function is as follows. DNA-dependent RNA polymerase catalyzes the transcription of DNA into RNA using the four ribonucleoside triphosphates as substrates. Common component of RNA polymerases I, II and III which synthesize ribosomal RNA precursors, mRNA precursors and many functional non-coding RNAs, and a small RNAs, such as 5S rRNA and tRNAs, respectively. Pol II is the central component of the basal RNA polymerase II transcription machinery. Pols are composed of mobile elements that move relative to each other. In Pol II, RBP10 is part of the core element with the central large cleft. In Dictyostelium discoideum (Social amoeba), this protein is DNA-directed RNA polymerases I, II, and III subunit rpabc5 (polr2l).